The primary structure comprises 112 residues: UPF0329 protein ECU11_0080 (112 aa).

This sequence belongs to the UPF0329 family.

The protein is UPF0329 protein ECU11_0080 of Encephalitozoon cuniculi (strain GB-M1) (Microsporidian parasite).